Here is a 463-residue protein sequence, read N- to C-terminus: Nucleobindin-1 (463 aa).

Residues 1 to 26 (MPPSGPQGTLLLLPLLLLLLLRAVLA) form the signal peptide. Phosphoserine is present on S86. T148 carries the post-translational modification Phosphothreonine. Positions 150 to 218 (EARDLELLIQ…QQRRHREHPK (69 aa)) form a coiled coil. A DNA-binding region spans residues 172-218 (HHEEFKRYEMLKEHERRRYLESLGEEQRKEAERRLEEQQRRHREHPK). Over residues 193–210 (SLGEEQRKEAERRLEEQQ) the composition is skewed to basic and acidic residues. The tract at residues 193 to 221 (SLGEEQRKEAERRLEEQQRRHREHPKVNV) is disordered. Positions 228 to 321 (LKEVWEELDG…VTLGEFLAST (94 aa)) are binds to GNAI2 and GNAI3. 2 EF-hand domains span residues 240 to 275 (PNRF…ELEK) and 292 to 327 (ERLR…KEFG). D253, N255, D257, E264, D305, N307, D309, and E316 together coordinate Ca(2+). The short motif at 303–333 (NVDTNQDRLVTLGEFLASTQRKEFGDTGEGW) is the GBA element. Positions 341–409 (AYTEEELRRF…KQQQQQQQQQ (69 aa)) form a coiled coil. Residues 368–463 (LSQETEALGR…LPEVEVPQHL (96 aa)) form a disordered region. S369 is modified (phosphoserine). Residues 439–463 (DQKEVDTSEKKLLERLPEVEVPQHL) show a composition bias toward basic and acidic residues.

This sequence belongs to the nucleobindin family. Interacts (via GBA motif) with guanine nucleotide-binding protein G(i) alpha subunits GNAI1, GNAI2 and GNAI3 with higher affinity for GNAI1 and GNAI3 than for GNAI2. Preferentially interacts with inactive rather than active GNAI3. Interaction with GNAI3 is inhibited when NUCB1 binds calcium, probably due to a conformational change which renders the GBA motif inaccessible.

The protein localises to the golgi apparatus. Its subcellular location is the cis-Golgi network membrane. It is found in the cytoplasm. The protein resides in the secreted. Major calcium-binding protein of the Golgi which may have a role in calcium homeostasis. Acts as a non-receptor guanine nucleotide exchange factor which binds to and activates alpha subunits of guanine nucleotide-binding proteins (G proteins). In Pongo abelii (Sumatran orangutan), this protein is Nucleobindin-1 (NUCB1).